The following is a 100-amino-acid chain: Urease subunit gamma (100 aa).

The protein belongs to the urease gamma subunit family. As to quaternary structure, heterotrimer of UreA (gamma), UreB (beta) and UreC (alpha) subunits. Three heterotrimers associate to form the active enzyme.

The protein resides in the cytoplasm. It carries out the reaction urea + 2 H2O + H(+) = hydrogencarbonate + 2 NH4(+). Its pathway is nitrogen metabolism; urea degradation; CO(2) and NH(3) from urea (urease route): step 1/1. The polypeptide is Urease subunit gamma (Verminephrobacter eiseniae (strain EF01-2)).